The chain runs to 525 residues: Glutamyl-tRNA(Gln) amidotransferase subunit A, mitochondrial (525 aa).

Active-site charge relay system residues include K76 and S168. Catalysis depends on S192, which acts as the Acyl-ester intermediate.

Belongs to the amidase family. GatA subfamily. Subunit of the heterotrimeric GatCAB amidotransferase (AdT) complex, composed of A (QRSL1), B (GATB) and C (GATC) subunits.

It is found in the mitochondrion. The enzyme catalyses L-glutamyl-tRNA(Gln) + L-glutamine + ATP + H2O = L-glutaminyl-tRNA(Gln) + L-glutamate + ADP + phosphate + H(+). In terms of biological role, allows the formation of correctly charged Gln-tRNA(Gln) through the transamidation of misacylated Glu-tRNA(Gln) in the mitochondria. The reaction takes place in the presence of glutamine and ATP through an activated gamma-phospho-Glu-tRNA(Gln). The polypeptide is Glutamyl-tRNA(Gln) amidotransferase subunit A, mitochondrial (Qrsl1) (Rattus norvegicus (Rat)).